Consider the following 142-residue polypeptide: Hemoglobin subunit alpha (142 aa).

The region spanning 1 to 142 (GLTAADKTLI…VEKALFETYR (142 aa)) is the Globin domain. H59 is a binding site for O2. H88 contacts heme b.

It belongs to the globin family. As to quaternary structure, heterotetramer of two alpha chains and two beta chains (an easy dimerization is also reported). Red blood cells.

Functionally, involved in oxygen transport from the lung to the various peripheral tissues. The sequence is that of Hemoglobin subunit alpha (HBA) from Latimeria chalumnae (Coelacanth).